Reading from the N-terminus, the 701-residue chain is Polyribonucleotide nucleotidyltransferase (701 aa).

Mg(2+)-binding residues include Asp-485 and Asp-491. A KH domain is found at 552-611 (PKIFKTTVDPEKIRDIIGPGGKMINKIIAKTNVKIDIEPDGRIFVAAPDDISGNRAISMI). One can recognise an S1 motif domain in the interval 621–689 (GQFFLGKVTR…RLGRIALSRK (69 aa)).

The protein belongs to the polyribonucleotide nucleotidyltransferase family. Requires Mg(2+) as cofactor.

It localises to the cytoplasm. The catalysed reaction is RNA(n+1) + phosphate = RNA(n) + a ribonucleoside 5'-diphosphate. Involved in mRNA degradation. Catalyzes the phosphorolysis of single-stranded polyribonucleotides processively in the 3'- to 5'-direction. This is Polyribonucleotide nucleotidyltransferase from Caldicellulosiruptor saccharolyticus (strain ATCC 43494 / DSM 8903 / Tp8T 6331).